Reading from the N-terminus, the 380-residue chain is 1-deoxy-D-xylulose 5-phosphate reductoisomerase (380 aa).

Residues T10, G11, S12, I13, G36, R37, N38, and N120 each contribute to the NADPH site. K121 lines the 1-deoxy-D-xylulose 5-phosphate pocket. Position 122 (E122) interacts with NADPH. D146 is a binding site for Mn(2+). Residues S147, E148, S172, and H195 each contribute to the 1-deoxy-D-xylulose 5-phosphate site. E148 is a Mn(2+) binding site. G201 lines the NADPH pocket. Residues S208, N213, K214, and E217 each coordinate 1-deoxy-D-xylulose 5-phosphate. A Mn(2+)-binding site is contributed by E217.

It belongs to the DXR family. Requires Mg(2+) as cofactor. It depends on Mn(2+) as a cofactor.

The catalysed reaction is 2-C-methyl-D-erythritol 4-phosphate + NADP(+) = 1-deoxy-D-xylulose 5-phosphate + NADPH + H(+). The protein operates within isoprenoid biosynthesis; isopentenyl diphosphate biosynthesis via DXP pathway; isopentenyl diphosphate from 1-deoxy-D-xylulose 5-phosphate: step 1/6. In terms of biological role, catalyzes the NADPH-dependent rearrangement and reduction of 1-deoxy-D-xylulose-5-phosphate (DXP) to 2-C-methyl-D-erythritol 4-phosphate (MEP). This Listeria monocytogenes serotype 4b (strain F2365) protein is 1-deoxy-D-xylulose 5-phosphate reductoisomerase.